Reading from the N-terminus, the 558-residue chain is Dihydroxy-acid dehydratase (558 aa).

Asp78 lines the Mg(2+) pocket. Cys119 is a binding site for [2Fe-2S] cluster. Positions 120 and 121 each coordinate Mg(2+). Residue Lys121 is modified to N6-carboxylysine. Residue Cys192 coordinates [2Fe-2S] cluster. Position 446 (Glu446) interacts with Mg(2+). The active-site Proton acceptor is the Ser472.

Belongs to the IlvD/Edd family. As to quaternary structure, homodimer. It depends on [2Fe-2S] cluster as a cofactor. Mg(2+) serves as cofactor.

It carries out the reaction (2R)-2,3-dihydroxy-3-methylbutanoate = 3-methyl-2-oxobutanoate + H2O. It catalyses the reaction (2R,3R)-2,3-dihydroxy-3-methylpentanoate = (S)-3-methyl-2-oxopentanoate + H2O. Its pathway is amino-acid biosynthesis; L-isoleucine biosynthesis; L-isoleucine from 2-oxobutanoate: step 3/4. It functions in the pathway amino-acid biosynthesis; L-valine biosynthesis; L-valine from pyruvate: step 3/4. In terms of biological role, functions in the biosynthesis of branched-chain amino acids. Catalyzes the dehydration of (2R,3R)-2,3-dihydroxy-3-methylpentanoate (2,3-dihydroxy-3-methylvalerate) into 2-oxo-3-methylpentanoate (2-oxo-3-methylvalerate) and of (2R)-2,3-dihydroxy-3-methylbutanoate (2,3-dihydroxyisovalerate) into 2-oxo-3-methylbutanoate (2-oxoisovalerate), the penultimate precursor to L-isoleucine and L-valine, respectively. In Campylobacter jejuni subsp. jejuni serotype O:2 (strain ATCC 700819 / NCTC 11168), this protein is Dihydroxy-acid dehydratase.